Consider the following 367-residue polypeptide: Metacaspase-1 (367 aa).

The disordered stretch occupies residues 47 to 77 (DPRTAPPPQPSSAPSPPPQIHAPPGQLPHPH). A compositionally biased stretch (pro residues) spans 50 to 73 (TAPPPQPSSAPSPPPQIHAPPGQL). Residues H164 and C220 contribute to the active site.

Belongs to the peptidase C14B family. As to quaternary structure, interacts (via N-terminus) with LSD1. Post-translationally, proteolytically processed; by an autocatalytic mechanism.

In terms of biological role, cysteine protease that cleaves specifically after arginine or lysine residues. Does not cleave caspase-specific substrates. Acts as a positive regulator of cell death. Required for both oxidative stress cell death response and hypersensitive cell death response mediated by immune response. The protein is Metacaspase-1 (AMC1) of Arabidopsis thaliana (Mouse-ear cress).